We begin with the raw amino-acid sequence, 63 residues long: Megourin-3 (63 aa).

Monomer. In terms of processing, contains four disulfide bonds.

Its subcellular location is the secreted. In terms of biological role, has antimicrobial activity against Gram-positive bacteria and fungi. This is Megourin-3 from Megoura viciae (Vetch aphid).